The chain runs to 348 residues: Uroporphyrinogen decarboxylase (348 aa).

Substrate is bound by residues 27–31 (RQAGR), Phe46, Asp76, Tyr152, Ser207, and His320.

The protein belongs to the uroporphyrinogen decarboxylase family. In terms of assembly, homodimer.

Its subcellular location is the cytoplasm. The catalysed reaction is uroporphyrinogen III + 4 H(+) = coproporphyrinogen III + 4 CO2. It functions in the pathway porphyrin-containing compound metabolism; protoporphyrin-IX biosynthesis; coproporphyrinogen-III from 5-aminolevulinate: step 4/4. Functionally, catalyzes the decarboxylation of four acetate groups of uroporphyrinogen-III to yield coproporphyrinogen-III. In Bacillus mycoides (strain KBAB4) (Bacillus weihenstephanensis), this protein is Uroporphyrinogen decarboxylase.